A 332-amino-acid polypeptide reads, in one-letter code: Ribosomal RNA small subunit methyltransferase C (332 aa).

It belongs to the methyltransferase superfamily. RsmC family. Monomer.

It localises to the cytoplasm. It catalyses the reaction guanosine(1207) in 16S rRNA + S-adenosyl-L-methionine = N(2)-methylguanosine(1207) in 16S rRNA + S-adenosyl-L-homocysteine + H(+). Specifically methylates the guanine in position 1207 of 16S rRNA in the 30S particle. The protein is Ribosomal RNA small subunit methyltransferase C of Pseudomonas aeruginosa (strain LESB58).